The sequence spans 150 residues: Protein adenylyltransferase MntA (150 aa).

Residues 32 to 46 carry the GSX(10)DXD motif motif; sequence GSRATGNINANSDWD. Active-site residues include Asp44 and Asp46. Positions 44, 46, and 86 each coordinate Mg(2+).

This sequence belongs to the MntA antitoxin family. In terms of assembly, forms a complex with HepT, probably MntA(1):HepT(2) in vivo; can only be purified when both 'Arg-102' and 'Tyr-109' (or 'His-107' and 'Tyr-109') of HepThave been mutated. The fully di-AMPylated HepT homodimer is not found in a complex with MntA. The cofactor is Mg(2+).

It carries out the reaction L-tyrosyl-[protein] + ATP = O-(5'-adenylyl)-L-tyrosyl-[protein] + diphosphate. The catalysed reaction is O-(5'-adenylyl)-L-tyrosyl-[protein] + ATP = O-[5'-(adenylyl-(5'-&gt;3')-adenylyl)]-L-tyrosyl-[protein] + diphosphate. Its function is as follows. Antitoxin component of a type VII toxin-antitoxin (TA) system. Upon cloning in E.coli neutralizes the effect of cognate toxin HepT. Neutralization is mostly due to di-AMPylation of toxin by this enzyme. Successively di-AMPylates HepT on 'Tyr-109'. In vitro will use ATP, dATP, GTP, dGTP, TTP or UTP to generate a mono-modified protein, but requires a purine nucleotide for the second modification reaction (ATP, dATP or GTP). The protein is Protein adenylyltransferase MntA of Aphanizomenon flos-aquae (strain 2012/KM1/D3).